The following is a 361-amino-acid chain: Alanine racemase 2 (361 aa).

The active-site Proton acceptor; specific for D-alanine is the Lys30. Lys30 is modified (N6-(pyridoxal phosphate)lysine). Residue Arg122 participates in substrate binding. Tyr256 acts as the Proton acceptor; specific for L-alanine in catalysis. Position 303 (Met303) interacts with substrate.

Belongs to the alanine racemase family. Requires pyridoxal 5'-phosphate as cofactor.

It catalyses the reaction L-alanine = D-alanine. Its pathway is amino-acid biosynthesis; D-alanine biosynthesis; D-alanine from L-alanine: step 1/1. Catalyzes the interconversion of L-alanine and D-alanine. May also act on other amino acids. The protein is Alanine racemase 2 (alr2) of Staphylococcus aureus (strain Mu50 / ATCC 700699).